We begin with the raw amino-acid sequence, 911 residues long: Protein translocase subunit SecA (911 aa).

ATP is bound by residues Gln-87, 105–109 (GEGKT), and Asp-512. The tract at residues 861 to 893 (APGLESEQLSEEGAEVAVASAPVRNDQKLGRNE) is disordered. Zn(2+)-binding residues include Cys-895, Cys-897, Cys-906, and His-907.

This sequence belongs to the SecA family. As to quaternary structure, monomer and homodimer. Part of the essential Sec protein translocation apparatus which comprises SecA, SecYEG and auxiliary proteins SecDF-YajC and YidC. Requires Zn(2+) as cofactor.

It is found in the cell inner membrane. The protein localises to the cytoplasm. It carries out the reaction ATP + H2O + cellular proteinSide 1 = ADP + phosphate + cellular proteinSide 2.. Part of the Sec protein translocase complex. Interacts with the SecYEG preprotein conducting channel. Has a central role in coupling the hydrolysis of ATP to the transfer of proteins into and across the cell membrane, serving both as a receptor for the preprotein-SecB complex and as an ATP-driven molecular motor driving the stepwise translocation of polypeptide chains across the membrane. In Pseudomonas putida (strain ATCC 700007 / DSM 6899 / JCM 31910 / BCRC 17059 / LMG 24140 / F1), this protein is Protein translocase subunit SecA.